The primary structure comprises 323 residues: MSCLSRLNASAAPWEPPVARAMAVEQYCPPPQSLLPPPPLPPVAVPTTCGCAACLQGCFVPVGVQAAFPHAAAGCAPPPPVMPVMIVYRVVQPPPPAAHATRCQITEIEDGGGVETAKAVDGDEPQPFIRTVRSTRRRKAAAIRLPKAFRAALLPPPPPPCALGFTATTTSLMIRNIPNKFLKARLMAILDQHCADENGKCHRRGGGGGRSVVKSEYDFFYVPIDFKTGFNKGYAFVNMTTATAARRLRAFLQDHRWDAAMSGKVCDVVPAAIQGLDAFVAHFSASCFPCRTKEFLPVWFEPPRDGEQQTKAHVVGRLVVRPR.

The sequence is that of Protein MEI2-like 6 (ML6) from Oryza sativa subsp. japonica (Rice).